The primary structure comprises 349 residues: UDP-N-acetylenolpyruvoylglucosamine reductase (349 aa).

The FAD-binding PCMH-type domain occupies 25-197 (GIAARARFAA…VAVTFRLPKQ (173 aa)). Arginine 173 is an active-site residue. The Proton donor role is filled by serine 249. Glutamate 345 is a catalytic residue.

It belongs to the MurB family. Requires FAD as cofactor.

It is found in the cytoplasm. The enzyme catalyses UDP-N-acetyl-alpha-D-muramate + NADP(+) = UDP-N-acetyl-3-O-(1-carboxyvinyl)-alpha-D-glucosamine + NADPH + H(+). It participates in cell wall biogenesis; peptidoglycan biosynthesis. Its function is as follows. Cell wall formation. In Burkholderia cenocepacia (strain HI2424), this protein is UDP-N-acetylenolpyruvoylglucosamine reductase.